The sequence spans 70 residues: MLPPCYNFLKEQHCQKASTQREAEAAVKPLLAPHHVVAVIQEIQLLAAVGEILLLEWLAEVVKLPSRYCC.

This is an uncharacterized protein from Homo sapiens (Human).